The chain runs to 96 residues: Co-chaperonin GroES (96 aa).

The protein belongs to the GroES chaperonin family. Heptamer of 7 subunits arranged in a ring. Interacts with the chaperonin GroEL.

Its subcellular location is the cytoplasm. Together with the chaperonin GroEL, plays an essential role in assisting protein folding. The GroEL-GroES system forms a nano-cage that allows encapsulation of the non-native substrate proteins and provides a physical environment optimized to promote and accelerate protein folding. GroES binds to the apical surface of the GroEL ring, thereby capping the opening of the GroEL channel. This Shewanella frigidimarina (strain NCIMB 400) protein is Co-chaperonin GroES.